The chain runs to 195 residues: Large ribosomal subunit protein uL5 (195 aa).

It belongs to the universal ribosomal protein uL5 family. In terms of assembly, part of the 50S ribosomal subunit; part of the 5S rRNA/L5/L18/L25 subcomplex. Contacts the 5S rRNA and the P site tRNA. Forms a bridge to the 30S subunit in the 70S ribosome.

This is one of the proteins that bind and probably mediate the attachment of the 5S RNA into the large ribosomal subunit, where it forms part of the central protuberance. In the 70S ribosome it contacts protein S13 of the 30S subunit (bridge B1b), connecting the 2 subunits; this bridge is implicated in subunit movement. Contacts the P site tRNA; the 5S rRNA and some of its associated proteins might help stabilize positioning of ribosome-bound tRNAs. The protein is Large ribosomal subunit protein uL5 of Leifsonia xyli subsp. xyli (strain CTCB07).